The primary structure comprises 418 residues: AP-3 complex subunit mu-1 (418 aa).

The MHD domain occupies 176–417 (NNEAYFDVIE…ITKAGKFQVR (242 aa)).

This sequence belongs to the adaptor complexes medium subunit family. As to quaternary structure, the AP-3 complex associates with the BLOC-1 complex.

The protein localises to the golgi apparatus. It is found in the cytoplasmic vesicle membrane. Part of the AP-3 complex, an adaptor-related complex which is not clathrin-associated. The complex is associated with the Golgi region as well as more peripheral structures. It facilitates the budding of vesicles from the Golgi membrane and may be directly involved in trafficking to lysosomes. In concert with the BLOC-1 complex, AP-3 is required to target cargos into vesicles assembled at cell bodies for delivery into neurites and nerve terminals. This Gallus gallus (Chicken) protein is AP-3 complex subunit mu-1 (AP3M1).